Consider the following 371-residue polypeptide: Cysteine endopeptidase Rep1 (371 aa).

Residues 1–28 (MGRVISSWRVLAVVAALMAMAAVELCAA) form the signal peptide. Residues 29–133 (IPFDERDLES…LPGFMYEGVR (105 aa)) constitute a propeptide, activation peptide. 3 disulfides stabilise this stretch: C156–C198, C190–C231, and C290–C342. The active site involves C159. The N-linked (GlcNAc...) asparagine glycan is linked to N228. Residues H296 and N317 contribute to the active site.

It belongs to the peptidase C1 family. Expressed in germinating seeds.

The protein resides in the protein storage vacuole. In terms of biological role, cysteine endopeptidase that digests in vitro both the acidic and basic subunits of glutelin, the major seed storage protein of rice. Acts as a negative regulator of cell death. The polypeptide is Cysteine endopeptidase Rep1 (Oryza sativa subsp. japonica (Rice)).